The chain runs to 596 residues: MRRMDRWTVCRRLASMARPVSFLEAALMAVVAACIVLGKWFDVMSIKRRGLIINGLKDIKGMGSANVSSIYGDAAAFLVLRTLSSAFTESKAILFSAVTNRVVQASTSRILDLTMHAAHSCEIKPTELNRIVERGNRKISKVLVKTLTVATPALFRLALLFREVHAMFGPKYLVPILFTAAAYAAYTCVMLRIRARYRKEINNADNSVSRRIHECVSNVDLVRACCSEQFEVSRLAGEMETMWALKLSDKGCVGMTNLGQRALFSVLFVHVAFKGIADMAALRMTVGDLSVLFSFVLSIDASMWTLGGIARDLGFWLTDCTDLLCLHDGLERAAEQGPGAGAAAEGMAACPSSPPGEAAAVEFDDVSFAYPRSAAYPRSAHVLSGVSFRIMRGERVGIIGRPGSGKSTILRLILMLHRHKGRIRVNGAELWSASPRAVRGSIGCILQDGLLFDESILYNVMYGCPRAGFHRVLRECKNAGLSDVVRRKGLHSRMKALSGGEMQMVSLARCFLKDAPLMLLDEATSKLDAETERDVFGLMMGMRGKTIVMVLHDLWMTEHLDRVILVDSGTVKEVGTHSELMGLRGMYWRMKTASRE.

A run of 3 helical transmembrane segments spans residues 26 to 46 (ALMAVVAACIVLGKWFDVMSI), 173 to 193 (LVPILFTAAAYAAYTCVMLRI), and 289 to 309 (LSVLFSFVLSIDASMWTLGGI). In terms of domain architecture, ABC transmembrane type-1 spans 39-318 (KWFDVMSIKR…IARDLGFWLT (280 aa)). The ABC transporter domain occupies 361–593 (VEFDDVSFAY…RGMYWRMKTA (233 aa)). Residues Tyr-370 and 400–411 (GRPGSGKSTILR) contribute to the ATP site.

Belongs to the ABC transporter superfamily. ABCB family. Heavy Metal importer (TC 3.A.1.210) subfamily.

The protein localises to the membrane. The sequence is that of Probable ABC transporter ECU01_0200/ECU01_1410 from Encephalitozoon cuniculi (strain GB-M1) (Microsporidian parasite).